The sequence spans 282 residues: Bifunctional protein FolD (282 aa).

NADP(+)-binding positions include 164–166 (GRS) and serine 189.

Belongs to the tetrahydrofolate dehydrogenase/cyclohydrolase family. Homodimer.

It catalyses the reaction (6R)-5,10-methylene-5,6,7,8-tetrahydrofolate + NADP(+) = (6R)-5,10-methenyltetrahydrofolate + NADPH. The catalysed reaction is (6R)-5,10-methenyltetrahydrofolate + H2O = (6R)-10-formyltetrahydrofolate + H(+). It functions in the pathway one-carbon metabolism; tetrahydrofolate interconversion. Catalyzes the oxidation of 5,10-methylenetetrahydrofolate to 5,10-methenyltetrahydrofolate and then the hydrolysis of 5,10-methenyltetrahydrofolate to 10-formyltetrahydrofolate. This is Bifunctional protein FolD from Lactobacillus gasseri (strain ATCC 33323 / DSM 20243 / BCRC 14619 / CIP 102991 / JCM 1131 / KCTC 3163 / NCIMB 11718 / NCTC 13722 / AM63).